Here is a 588-residue protein sequence, read N- to C-terminus: Phomenoic acid biosynthesis cluster cytochrome P450 monooxygenase (588 aa).

Positions 1 to 21 are cleaved as a signal peptide; it reads MSFARIFITILLLFILRRAFK. Residue Asn293 is glycosylated (N-linked (GlcNAc...) asparagine). Residues 467–486 show a composition bias toward basic and acidic residues; that stretch reads HQSDPDRFKPSPDAPDEKLF. The disordered stretch occupies residues 467–490; it reads HQSDPDRFKPSPDAPDEKLFRPSR. Cys519 contributes to the heme binding site.

It belongs to the cytochrome P450 family. The cofactor is heme.

Its pathway is secondary metabolite biosynthesis. Functionally, cytochrome P450 monooxygenase; part of the gene cluster that mediates the biosynthesis of phomenoic acid, a long chain aliphatic carboxylic acid that does not appear to be essential for pathogenicity but may play a role in allowing to outcompete other fungi in the environmental niche via its antifungal properties. The polyketide synthase produces the long methylated aliphatic carboxylic acid chain of phomenoic acid. The cluster-specific cytochrome P450 monooxygenase may then hydroxylate the methyl group of carbon 31. The putative dehydrogenase YogA, which has no obvious role in phomenoic acid biosynthesis, may further modify phomenoic acid to produce a compound not identified yet. The sequence is that of Phomenoic acid biosynthesis cluster cytochrome P450 monooxygenase from Leptosphaeria maculans (strain JN3 / isolate v23.1.3 / race Av1-4-5-6-7-8) (Blackleg fungus).